The chain runs to 818 residues: MKFTLSWLKQFLETSSTVIEIAEALTAIGLEVEEVIDKAAELQKFEVAYIASTKPHPSADKLKLCDVETKSGMRQIVCGASNARAGIKVVLANIGIEIPNGKFKIKESIIRGEKSCGMLCSEEELLLASESEGIIELYEDAVVGENFTKYYGLDDPIFVINVTPNRGDALGVYGIARDLAAKGIGILKELEIPEIKSTFTSKMKLNVQDKEACPLFTFREIRNLKNKPSPDWLRKLLKNVGVKTISSLVDVTNYISYSFGQPMHAYDADRIKGGISVARHCEKCSDEAISGQQKEIAAAALQPRNDVAKFHALNGKEYLLTENDLAIKDESGIQGLAGVIGGAKSSCTDSTTNIILEAACFNAKMVAASGRRFQIDTDARYRNERNIDRNFTEKALDIATNLILSICGNGEVSEVVKFGEKEPQKKPLDFSAYYLEKITGIKLSIKEIEAILNELGFITDVKGEIIKVIAPSWRHDITILEDIAEEITRIYGYDKIESIKLPELDQDNNKLREYKRISSFKRILASKGYDEVVTNSFMSSEDAKLFAELKEELFLLNPISIGDNYMRPTILPNLLSIVSKNLARSIKDMAFFEVGPSFIDLNTEATYLTAIISGSYNNKNPHSLGRGYDIFDLKGDLELVVDYAGLSIDKCIATNGTALPQYYHPTRAVNIGLGKNLLGHFGQIHPKILKYYDINQEIFAFELNITNLPLIKAKFGKREEFAVSDFQANFRDYAFIVDQDHRVGEIISYINNFNKKLVKSVILFDIYSGDKLPESKKSIAIKIELQADDRTLTEADLNLFSQDLIAAIEQKFQGTLRE.

One can recognise a tRNA-binding domain in the interval 39–148 (AAELQKFEVA…EDAVVGENFT (110 aa)). Residues 423-498 (PQKKPLDFSA…RIYGYDKIES (76 aa)) form the B5 domain. Mg(2+) is bound by residues aspartate 476, aspartate 482, glutamate 485, and glutamate 486. The FDX-ACB domain maps to 724-817 (SDFQANFRDY…IEQKFQGTLR (94 aa)).

Belongs to the phenylalanyl-tRNA synthetase beta subunit family. Type 1 subfamily. Tetramer of two alpha and two beta subunits. Mg(2+) serves as cofactor.

The protein localises to the cytoplasm. It catalyses the reaction tRNA(Phe) + L-phenylalanine + ATP = L-phenylalanyl-tRNA(Phe) + AMP + diphosphate + H(+). This is Phenylalanine--tRNA ligase beta subunit from Rickettsia felis (strain ATCC VR-1525 / URRWXCal2) (Rickettsia azadi).